We begin with the raw amino-acid sequence, 542 residues long: Calcium-dependent protein kinase 7 (542 aa).

Glycine 2 carries N-myristoyl glycine lipidation. In terms of domain architecture, Protein kinase spans 79 to 337 (YIIGRKLGQG…AHEVLRHPWI (259 aa)). ATP is bound by residues 85-93 (LGQGQFGTT) and lysine 108. The active-site Proton acceptor is aspartate 203. An autoinhibitory domain region spans residues 343–373 (ATDQALDPSVISRLKQFSAMNKLKKLALRVI). The 36-residue stretch at 380–415 (EEIAGLREMFKAVDTKNRGVITFGELREGLRRFGAE) folds into the EF-hand 1 domain. Ca(2+) contacts are provided by aspartate 393, glutamate 404, aspartate 431, asparagine 433, threonine 435, glutamate 440, aspartate 465, aspartate 467, serine 469, tyrosine 471, lysine 476, aspartate 499, asparagine 501, aspartate 503, glutamine 505, and glutamate 510. Positions 416–451 (FKDTEIGDIMEAAHNDNNVTIHYEEFIAATLPLNKI) constitute an EF-hand 2; degenerate domain. EF-hand domains follow at residues 452–487 (EREE…HNME) and 488–521 (DSLL…SNVG).

It belongs to the protein kinase superfamily. Ser/Thr protein kinase family. CDPK subfamily. In terms of tissue distribution, expressed in roots. Expressed in leaf sheaths.

Its subcellular location is the membrane. The protein localises to the cytoplasm. The protein resides in the cytosol. The catalysed reaction is L-seryl-[protein] + ATP = O-phospho-L-seryl-[protein] + ADP + H(+). The enzyme catalyses L-threonyl-[protein] + ATP = O-phospho-L-threonyl-[protein] + ADP + H(+). Activated by calcium. Autophosphorylation may play an important role in the regulation of the kinase activity. Its function is as follows. May play a role in signal transduction pathways that involve calcium as a second messenger. May be a signaling component in the response to gibberellin and cold stress. This is Calcium-dependent protein kinase 7 from Oryza sativa subsp. japonica (Rice).